Here is a 201-residue protein sequence, read N- to C-terminus: Imidazole glycerol phosphate synthase subunit HisH (201 aa).

Residues 1 to 201 (MVFIADYGAG…LQVLRNFAEC (201 aa)) form the Glutamine amidotransferase type-1 domain. Cys-79 acts as the Nucleophile in catalysis. Residues His-183 and Glu-185 contribute to the active site.

As to quaternary structure, heterodimer of HisH and HisF.

Its subcellular location is the cytoplasm. It catalyses the reaction 5-[(5-phospho-1-deoxy-D-ribulos-1-ylimino)methylamino]-1-(5-phospho-beta-D-ribosyl)imidazole-4-carboxamide + L-glutamine = D-erythro-1-(imidazol-4-yl)glycerol 3-phosphate + 5-amino-1-(5-phospho-beta-D-ribosyl)imidazole-4-carboxamide + L-glutamate + H(+). It carries out the reaction L-glutamine + H2O = L-glutamate + NH4(+). It functions in the pathway amino-acid biosynthesis; L-histidine biosynthesis; L-histidine from 5-phospho-alpha-D-ribose 1-diphosphate: step 5/9. Its function is as follows. IGPS catalyzes the conversion of PRFAR and glutamine to IGP, AICAR and glutamate. The HisH subunit catalyzes the hydrolysis of glutamine to glutamate and ammonia as part of the synthesis of IGP and AICAR. The resulting ammonia molecule is channeled to the active site of HisF. This Chlorobium luteolum (strain DSM 273 / BCRC 81028 / 2530) (Pelodictyon luteolum) protein is Imidazole glycerol phosphate synthase subunit HisH.